A 231-amino-acid chain; its full sequence is 5'-methylthioadenosine/S-adenosylhomocysteine nucleosidase (231 aa).

E12 functions as the Proton acceptor in the catalytic mechanism. Substrate contacts are provided by residues G78, M153, and 174 to 175 (ME). Residue D198 is the Proton donor of the active site.

Belongs to the PNP/UDP phosphorylase family. MtnN subfamily.

It carries out the reaction S-adenosyl-L-homocysteine + H2O = S-(5-deoxy-D-ribos-5-yl)-L-homocysteine + adenine. The catalysed reaction is S-methyl-5'-thioadenosine + H2O = 5-(methylsulfanyl)-D-ribose + adenine. It catalyses the reaction 5'-deoxyadenosine + H2O = 5-deoxy-D-ribose + adenine. The protein operates within amino-acid biosynthesis; L-methionine biosynthesis via salvage pathway; S-methyl-5-thio-alpha-D-ribose 1-phosphate from S-methyl-5'-thioadenosine (hydrolase route): step 1/2. Catalyzes the irreversible cleavage of the glycosidic bond in both 5'-methylthioadenosine (MTA) and S-adenosylhomocysteine (SAH/AdoHcy) to adenine and the corresponding thioribose, 5'-methylthioribose and S-ribosylhomocysteine, respectively. Also cleaves 5'-deoxyadenosine, a toxic by-product of radical S-adenosylmethionine (SAM) enzymes, into 5-deoxyribose and adenine. This chain is 5'-methylthioadenosine/S-adenosylhomocysteine nucleosidase, found in Bacillus pumilus (strain SAFR-032).